We begin with the raw amino-acid sequence, 255 residues long: tRNA (guanine-N(1)-)-methyltransferase (255 aa).

Residues glycine 112 and 131-136 contribute to the S-adenosyl-L-methionine site; that span reads LGDYVL.

This sequence belongs to the RNA methyltransferase TrmD family. In terms of assembly, homodimer.

The protein resides in the cytoplasm. It catalyses the reaction guanosine(37) in tRNA + S-adenosyl-L-methionine = N(1)-methylguanosine(37) in tRNA + S-adenosyl-L-homocysteine + H(+). Specifically methylates guanosine-37 in various tRNAs. In Lacticaseibacillus paracasei (strain ATCC 334 / BCRC 17002 / CCUG 31169 / CIP 107868 / KCTC 3260 / NRRL B-441) (Lactobacillus paracasei), this protein is tRNA (guanine-N(1)-)-methyltransferase.